We begin with the raw amino-acid sequence, 512 residues long: Polyamine oxidase 1 (512 aa).

Residues Glu-38 and Arg-46 each contribute to the FAD site. Residues 448 to 470 (DRMAEPLPRGPDAAADERPPSPR) form a disordered region. Residue Glu-476 participates in FAD binding.

It belongs to the flavin monoamine oxidase family. Requires FAD as cofactor.

The protein resides in the cytoplasm. It carries out the reaction spermine + O2 + H2O = 3-aminopropanal + spermidine + H2O2. The enzyme catalyses N(1)-acetylspermine + O2 + H2O = 3-acetamidopropanal + spermidine + H2O2. It catalyses the reaction norspermine + O2 + H2O = norspermidine + 3-aminopropanal + H2O2. The catalysed reaction is thermospermine + O2 + H2O = 3-aminopropanal + spermidine + H2O2. It functions in the pathway amine and polyamine degradation; spermine degradation. Functionally, flavoenzyme involved in polyamine back-conversion. Catalyzes the oxidation of the secondary amino group of polyamines, such as spermine and its acetyl derivatives. Substrate preference is thermospermine &gt; spermine &gt; norspermine &gt; N(1)-acetylspermine. No activity detected when putrescine or spermidine are used as substrates. Plays an important role in the regulation of polyamine intracellular concentration. The sequence is that of Polyamine oxidase 1 from Oryza sativa subsp. japonica (Rice).